The following is a 455-amino-acid chain: Cysteinylglycine-S-conjugate dipeptidase (455 aa).

H92 provides a ligand contact to Zn(2+). The active site involves D94. D125 provides a ligand contact to Zn(2+). E158 functions as the Proton acceptor in the catalytic mechanism. E159, E163, and H428 together coordinate Zn(2+).

Belongs to the peptidase M20F family. It depends on Zn(2+) as a cofactor.

It catalyses the reaction an S-substituted L-cysteinylglycine + H2O = an S-substituted L-cysteine + glycine. The enzyme catalyses S-(1-hydroxy-3-methylhexan-3-yl)-L-cysteinylglycine + H2O = S-(1-hydroxy-3-methylhexan-3-yl)-L-cysteine + glycine. It carries out the reaction S-benzyl-L-cysteinylglycine + H2O = S-benzyl-L-cysteine + glycine. Functionally, metallopeptidase that hydrolyzes the Cys-Gly bond of Cys-Gly-S-conjugates. Involved in the formation of the human body odorant 3-methyl-3-sulfanylhexan-1-ol (3M3SH) from odorless axilla secretions. Catalyzes the hydrolysis of the Cys-Gly bond of the Cys-Gly-S-conjugate of 3M3SH, a key precursor secreted by apocrine glands in human axilla skin. The Cys-S-conjugate obtained is then cleaved by the Cys-S-conjugate beta-lyase MetC, which finally releases 3M3SH. The polypeptide is Cysteinylglycine-S-conjugate dipeptidase (Corynebacterium striatum).